The primary structure comprises 354 residues: Arginase-2, mitochondrial (354 aa).

A mitochondrion-targeting transit peptide spans 1-22; the sequence is MSLRGSLSRLLQTRVHSILKKS. The Mn(2+) site is built by His120, Asp143, His145, and Asp147. Substrate is bound by residues 145-149, 156-158, and Asp202; these read HADIN and SGN. Residues Asp251 and Asp253 each coordinate Mn(2+). 2 residues coordinate substrate: Thr265 and Glu296. Residues 334 to 354 are disordered; it reads YDQLPTPSSPDESENQARVRI.

The protein belongs to the arginase family. In terms of assembly, homotrimer. It depends on Mn(2+) as a cofactor. Expressed most strongly in kidney and prostate, much less strongly in the brain, skeletal muscle, placenta, lung, mammary gland, macrophage, uterus, testis and gut, but apparently not in the liver, heart and pancreas. Expressed in activated T cells.

It localises to the mitochondrion. It catalyses the reaction L-arginine + H2O = urea + L-ornithine. Its pathway is nitrogen metabolism; urea cycle; L-ornithine and urea from L-arginine: step 1/1. In terms of biological role, may play a role in the regulation of extra-urea cycle arginine metabolism and also in down-regulation of nitric oxide synthesis. Extrahepatic arginase functions to regulate L-arginine bioavailability to nitric oxid synthase (NOS). Arginine metabolism is a critical regulator of innate and adaptive immune responses. Seems to be involved in negative regulation of the survival capacity of activated CD4(+) and CD8(+) T cells. May suppress inflammation-related signaling in asthmatic airway epithelium. May contribute to the immune evasion of H.pylori by restricting M1 macrophage activation and polyamine metabolism. In fetal dendritic cells may play a role in promoting immune suppression and T cell TNF-alpha production during gestation. Regulates RPS6KB1 signaling, which promotes endothelial cell senescence and inflammation and implicates NOS3/eNOS dysfunction. Can inhibit endothelial autophagy independently of its enzymatic activity implicating mTORC2 signaling. Involved in vascular smooth muscle cell senescence and apoptosis independently of its enzymatic activity. Since NOS is found in the penile corpus cavernosum smooth muscle, the clitoral corpus cavernosum and the vagina, arginase-2 plays a role in both male and female sexual arousal. This Homo sapiens (Human) protein is Arginase-2, mitochondrial (ARG2).